Here is a 207-residue protein sequence, read N- to C-terminus: Ras-related protein Rab-8B (207 aa).

Serine 17, glycine 18, valine 19, glycine 20, lysine 21, threonine 22, cysteine 23, threonine 35, serine 39, and threonine 40 together coordinate GTP. Threonine 22 contacts Mg(2+). 2 consecutive short sequence motifs (switch) follow at residues 31–45 (DAFN…GIDF) and 63–80 (DTAG…YYRG). Threonine 40 and aspartate 63 together coordinate Mg(2+). Position 66 (glycine 66) interacts with GTP. Threonine 72 is modified (phosphothreonine). GTP is bound by residues asparagine 121, lysine 122, aspartate 124, alanine 152, and lysine 153. Phosphoserine is present on serine 180. Cysteine 204 carries the post-translational modification Cysteine methyl ester. Cysteine 204 carries the S-geranylgeranyl cysteine lipid modification. The propeptide at 205-207 (LLL) is removed in mature form.

This sequence belongs to the small GTPase superfamily. Rab family. As to quaternary structure, associated with actin, delta-catenin and alpha and beta tubulins. Interacts with OTOF. Interacts with PEX5R. Interacts with RAB3IP. Interacts with VIM. Interacts with CDH1. Interacts with MICALL2. Interacts with GDI1, GDI2, CHML and CHM; phosphorylation at Thr-72 disrupts these interactions. Interacts with MICAL1. The cofactor is Mg(2+). In terms of processing, phosphorylation of Thr-72 in the switch II region by LRRK2 prevents the association of RAB regulatory proteins, including CHM, CHML and RAB GDP dissociation inhibitors GDI1 and GDI2.

The protein localises to the cell membrane. It localises to the cytoplasmic vesicle. The protein resides in the phagosome membrane. Its subcellular location is the endosome membrane. It carries out the reaction GTP + H2O = GDP + phosphate + H(+). Regulated by guanine nucleotide exchange factors (GEFs) including RAB3IP/RABIN8 which promotes the exchange of bound GDP for free GTP. Regulated by GTPase activating proteins (GAPs) which increase the GTP hydrolysis activity. Inhibited by GDP dissociation inhibitors (GDIs). Its function is as follows. The small GTPases Rab are key regulators of intracellular membrane trafficking, from the formation of transport vesicles to their fusion with membranes. Rabs cycle between an inactive GDP-bound form and an active GTP-bound form that is able to recruit to membranes different sets of downstream effectors directly responsible for vesicle formation, movement, tethering and fusion. RAB8B may be involved in polarized vesicular trafficking and neurotransmitter release. May participate in cell junction dynamics in Sertoli cells. May also participate in the export of a subset of neosynthesized proteins through a Rab8-Rab10-Rab11-dependent endososomal export route. In Pongo abelii (Sumatran orangutan), this protein is Ras-related protein Rab-8B (RAB8B).